The chain runs to 474 residues: tRNA-2-methylthio-N(6)-dimethylallyladenosine synthase (474 aa).

In terms of domain architecture, MTTase N-terminal spans 3-120 (KKLHIKTWGC…LPEMINSVRG (118 aa)). Cys-12, Cys-49, Cys-83, Cys-157, Cys-161, and Cys-164 together coordinate [4Fe-4S] cluster. The region spanning 143–375 (RAEGPTAFVS…QERINQQAMA (233 aa)) is the Radical SAM core domain. The region spanning 378–441 (RRMLGTTQRI…PNSLRGKVVR (64 aa)) is the TRAM domain.

The protein belongs to the methylthiotransferase family. MiaB subfamily. In terms of assembly, monomer. [4Fe-4S] cluster serves as cofactor.

Its subcellular location is the cytoplasm. It carries out the reaction N(6)-dimethylallyladenosine(37) in tRNA + (sulfur carrier)-SH + AH2 + 2 S-adenosyl-L-methionine = 2-methylsulfanyl-N(6)-dimethylallyladenosine(37) in tRNA + (sulfur carrier)-H + 5'-deoxyadenosine + L-methionine + A + S-adenosyl-L-homocysteine + 2 H(+). Functionally, catalyzes the methylthiolation of N6-(dimethylallyl)adenosine (i(6)A), leading to the formation of 2-methylthio-N6-(dimethylallyl)adenosine (ms(2)i(6)A) at position 37 in tRNAs that read codons beginning with uridine. In Escherichia coli (strain UTI89 / UPEC), this protein is tRNA-2-methylthio-N(6)-dimethylallyladenosine synthase.